The following is a 248-amino-acid chain: Cyclo(L-leucyl-L-leucyl) synthase (248 aa).

S37 functions as the Nucleophile in the catalytic mechanism. Substrate contacts are provided by residues N40, 180–184 (YVIAE), Y204, and 209–210 (KL).

The protein belongs to the CDPS family. As to quaternary structure, monomer.

The catalysed reaction is 2 L-leucyl-tRNA(Leu) = cyclo(L-leucyl-L-leucyl) + 2 tRNA(Leu) + 2 H(+). Its function is as follows. Involved in the biosynthesis of pulcherrimin, a red extracellular pigment. It uses activated amino acids in the form of aminoacyl-tRNAs (aa-tRNAs) as substrates to catalyze the ATP-independent formation of cyclodipeptides which are intermediates in diketopiperazine (DKP) biosynthetic pathways. Catalyzes the formation of cyclo(L-Leu-L-Leu) (cLL) from L-leucyl-tRNA(Leu). Can also incorporate various nonpolar residues, such as L-phenylalanine, L-leucine and methionine, into cyclodipeptides. This Bacillus subtilis (strain 168) protein is Cyclo(L-leucyl-L-leucyl) synthase (yvmC).